The chain runs to 179 residues: Replication restart protein DnaT (179 aa).

Over residues 151–168 (SRSSNGGMPQRDINSVSE) the composition is skewed to polar residues. Positions 151 to 179 (SRSSNGGMPQRDINSVSEPDNHIPPGFRG) are disordered.

Belongs to the DnaT family. As to quaternary structure, homooligomerizes. Interacts with PriB. Component of the replication restart primosome. Primosome assembly occurs via a 'hand-off' mechanism. PriA binds to replication forks, subsequently PriB then DnaT bind; DnaT then displaces ssDNA to generate the helicase loading substrate.

Its function is as follows. Involved in the restart of stalled replication forks, which reloads the replicative helicase on sites other than the origin of replication. Can function in multiple replication restart pathways. Displaces ssDNA from a PriB-ssDNA complex. Probably forms a spiral filament on ssDNA. This Salmonella heidelberg (strain SL476) protein is Replication restart protein DnaT.